The chain runs to 372 residues: Lectin/endochitinase 1 (372 aa).

The first 23 residues, 1–23 (MMMRFLSAVVIMSSAMAVGLVSA), serve as a signal peptide directing secretion. Gln-24 is a substrate binding site. Gln-24 bears the Pyrrolidone carboxylic acid mark. 2 Chitin-binding type-1 domains span residues 24-64 (QRCG…KCWS) and 69-111 (DHRC…RCSS). 4 disulfides stabilise this stretch: Cys-26–Cys-41, Cys-35–Cys-47, Cys-40–Cys-54, and Cys-58–Cys-62. 42–53 (SIWGWCGDSEPY) serves as a coordination point for substrate. His-70 contributes to the Zn(2+) binding site. 4 disulfide bridges follow: Cys-72–Cys-87, Cys-81–Cys-93, Cys-86–Cys-100, and Cys-105–Cys-109. His-90 contributes to the Zn(2+) binding site. The interval 113 to 128 (VRGPRVALSGNSTANS) is spacer. An N-linked (GlcNAc...) asparagine glycan is attached at Asn-123. The interval 129-372 (IGNVVVTEPL…FQRIQMRVAA (244 aa)) is chitinase.

Monomer and homodimer. Zinc favors dimerization. Active in the monomeric form but probably inactive in the dimeric form. The interaction with glycans on the mammalian TCR and MHC molecules of the T-cell and antigen-presenting cell, respectively, is inhibited by oligomers of GlcNAc. Post-translationally, proteolytically processed to yield a very small protein (8.5 kDa, 86 AA) containing only the two chitin-binding domains. As to expression, rhizomes and inflorescence with immature seeds.

It carries out the reaction Random endo-hydrolysis of N-acetyl-beta-D-glucosaminide (1-&gt;4)-beta-linkages in chitin and chitodextrins.. In terms of biological role, functions both as a chitinase and as a N-acetyl-D-glucosamine binding lectin. Inhibits the growth of several phytopathogenic chitin-containing fungi. Also possesses insecticidal activity and superantigenic properties. This chain is Lectin/endochitinase 1 (UDA1), found in Urtica dioica (Great nettle).